The primary structure comprises 250 residues: 5-oxoprolinase subunit A (250 aa).

The protein belongs to the LamB/PxpA family. Forms a complex composed of PxpA, PxpB and PxpC.

It catalyses the reaction 5-oxo-L-proline + ATP + 2 H2O = L-glutamate + ADP + phosphate + H(+). Its function is as follows. Catalyzes the cleavage of 5-oxoproline to form L-glutamate coupled to the hydrolysis of ATP to ADP and inorganic phosphate. The protein is 5-oxoprolinase subunit A of Nocardia farcinica (strain IFM 10152).